Reading from the N-terminus, the 550-residue chain is Acetyl-coenzyme A transporter 1 (550 aa).

Residues Met1 to Ser74 are Cytoplasmic-facing. Phosphoserine is present on Ser42. Residues Ile75 to Ile95 form a helical membrane-spanning segment. Residues Pro96–Ser113 lie on the Extracellular side of the membrane. A glycan (N-linked (GlcNAc...) asparagine) is linked at Asn103. Residues Phe114–Phe134 traverse the membrane as a helical segment. Topologically, residues Lys135 to Lys141 are cytoplasmic. The helical transmembrane segment at Ser142 to Val162 threads the bilayer. The Extracellular portion of the chain corresponds to Asp163–Thr256. Residues Leu257–Leu277 traverse the membrane as a helical segment. Residues Leu278 to Lys300 are Cytoplasmic-facing. Residues Leu301–Ser321 form a helical membrane-spanning segment. The Extracellular segment spans residues Lys322–Glu344. A helical transmembrane segment spans residues His345–Ser365. Over Lys366 to Asn375 the chain is Cytoplasmic. The helical transmembrane segment at Ile376 to Trp396 threads the bilayer. At Trp397–Gly405 the chain is on the extracellular side. The helical transmembrane segment at Gly406–Leu426 threads the bilayer. The Cytoplasmic portion of the chain corresponds to Tyr427–Asp509. The helical transmembrane segment at Gly510–Gly530 threads the bilayer. Residues Pro531 to Asn550 are Extracellular-facing.

It belongs to the SLC33A transporter family. In terms of assembly, homodimerizes. In terms of tissue distribution, expressed in brain at all developmental stages. Detected in hippocampus, hypothalamus, cerebellum, cortex, olfactory bulb, and the ventral and dorsal anterior olfactory nucleus.

The protein resides in the endoplasmic reticulum membrane. The enzyme catalyses acetyl-CoA(in) = acetyl-CoA(out). In terms of biological role, acetyl-CoA transporter that mediates active acetyl-CoA import through the endoplasmic reticulum (ER) membrane into the ER lumen where specific ER-based acetyl-CoA:lysine acetyltransferases are responsible for the acetylation of ER-based protein substrates, such as BACE1. Necessary for O-acetylation of gangliosides. This Rattus norvegicus (Rat) protein is Acetyl-coenzyme A transporter 1 (Slc33a1).